A 354-amino-acid chain; its full sequence is Arginase-2, mitochondrial (354 aa).

The transit peptide at 1-22 (MSLRSHLSRLLRTQVHSVRKKS) directs the protein to the mitochondrion. Residues H120, D143, H145, and D147 each contribute to the Mn(2+) site. Residues 145–149 (HADIN), 156–158 (SGN), and D202 each bind substrate. D251 and D253 together coordinate Mn(2+). 2 residues coordinate substrate: T265 and E296. Positions 332-354 (IVYDQLPTPSSPDESESEERVRI) are disordered.

This sequence belongs to the arginase family. Homotrimer. It depends on Mn(2+) as a cofactor.

It is found in the mitochondrion. The enzyme catalyses L-arginine + H2O = urea + L-ornithine. It functions in the pathway nitrogen metabolism; urea cycle; L-ornithine and urea from L-arginine: step 1/1. In terms of biological role, may play a role in the regulation of extra-urea cycle arginine metabolism and also in down-regulation of nitric oxide synthesis. Extrahepatic arginase functions to regulate L-arginine bioavailability to nitric oxid synthase (NOS). Arginine metabolism is a critical regulator of innate and adaptive immune responses. Seems to be involved in negative regulation of the survival capacity of activated T cells. May suppress inflammation-related signaling in asthmatic airway epithelium. May play a role in promoting prenatal immune suppression. Regulates RPS6KB1 signaling, which promotes endothelial cell senescence and inflammation and implicates NOS3/eNOS dysfunction. Can inhibit endothelial autophagy independently of its enzymatic activity implicating mTORC2 signaling. Involved in vascular smooth muscle cell senescence and apoptosis independently of its enzymatic activity. This chain is Arginase-2, mitochondrial (ARG2), found in Bos taurus (Bovine).